Reading from the N-terminus, the 291-residue chain is 33 kDa chaperonin (291 aa).

2 cysteine pairs are disulfide-bonded: Cys-229-Cys-231 and Cys-262-Cys-265.

Belongs to the HSP33 family. Post-translationally, under oxidizing conditions two disulfide bonds are formed involving the reactive cysteines. Under reducing conditions zinc is bound to the reactive cysteines and the protein is inactive.

Its subcellular location is the cytoplasm. Its function is as follows. Redox regulated molecular chaperone. Protects both thermally unfolding and oxidatively damaged proteins from irreversible aggregation. Plays an important role in the bacterial defense system toward oxidative stress. This is 33 kDa chaperonin from Vibrio cholerae serotype O1 (strain ATCC 39315 / El Tor Inaba N16961).